Reading from the N-terminus, the 607-residue chain is UvrABC system protein C (607 aa).

Residues 16-94 (GRPGVYRMFD…IKEWRPPYNI (79 aa)) form the GIY-YIG domain. One can recognise a UVR domain in the interval 203–238 (NALSDELNASMEKAAMALDFERAAELRDQVALLRRV).

This sequence belongs to the UvrC family. In terms of assembly, interacts with UvrB in an incision complex.

The protein localises to the cytoplasm. Its function is as follows. The UvrABC repair system catalyzes the recognition and processing of DNA lesions. UvrC both incises the 5' and 3' sides of the lesion. The N-terminal half is responsible for the 3' incision and the C-terminal half is responsible for the 5' incision. In Pseudomonas syringae pv. syringae (strain B728a), this protein is UvrABC system protein C.